A 667-amino-acid chain; its full sequence is MAGMKTASGDYIDSSWELRVFVGEEDPEAESVTLRVTGESHIGGVLLKIVEQINRKQDWSDHAIWWEQKRQWLLQTHWTLDKYGILADARLFFGPQHRPVILRLPNRRALRLRASFSQPLFQAVAAICRLLSIRHPEELSLLRAPEKKEKKKKEKEPEEELYDLSKVVLAGGVAPALFRGMPAHFSDSAQTEACYHMLSRPQPPPDPLLLQRLPRPSSLSDKTQLHSRWLDSSRCLMQQGIKAGDALWLRFKYYSFFDLDPKTDPVRLTQLYEQARWDLLLEEIDCTEEEMMVFAALQYHINKLSQSGEVGEPAGTDPGLDDLDVALSNLEVKLEGSAPTDVLDSLTTIPELKDHLRIFRIPRRPRKLTLKGYRQHWVVFKETTLSYYKSQDEAPGDPIQQLNLKGCEVVPDVNVSGQKFCIKLLVPSPEGMSEIYLRCQDEQQYARWMAGCRLASKGRTMADSSYTSEVQAILAFLSLQRTGSGGPGNHPHGPDASAEGLNPYGLVAPRFQRKFKAKQLTPRILEAHQNVAQLSLAEAQLRFIQAWQSLPDFGISYVMVRFKGSRKDEILGIANNRLIRIDLAVGDVVKTWRFSNMRQWNVNWDIRQVAIEFDEHINVAFSCVSASCRIVHEYIGGYIFLSTRERARGEELDEDLFLQLTGGHEAF.

Ser-8 is modified (phosphoserine). Position 11 is a phosphotyrosine (Tyr-11). One can recognise an FERM domain in the interval Trp-229–Val-558. Residues Asp-354–Lys-457 enclose the PH domain. Tyr-504 carries the post-translational modification Phosphotyrosine. Thr-591 is subject to Phosphothreonine.

It belongs to the kindlin family. Interacts with ITGB1, ITGB2 and ITGB3 (via cytoplasmic tails). As to expression, highly expressed in lymph node. Expressed in thymus, spleen and leukocytes. Weakly expressed in placenta, small intestine, stomach, testis and lung. Overexpressed in B-cell malignancies.

The protein resides in the cell projection. The protein localises to the podosome. In terms of biological role, plays a central role in cell adhesion in hematopoietic cells. Acts by activating the integrin beta-1-3 (ITGB1, ITGB2 and ITGB3). Required for integrin-mediated platelet adhesion and leukocyte adhesion to endothelial cells. Required for activation of integrin beta-2 (ITGB2) in polymorphonuclear granulocytes (PMNs). Functionally, isoform 2 may act as a repressor of NF-kappa-B and apoptosis. The chain is Fermitin family homolog 3 (FERMT3) from Homo sapiens (Human).